We begin with the raw amino-acid sequence, 392 residues long: MITLITEQLQKQTLDELKCTRFSISLPLPDHADISNCGNPFQLVSEGASWRGLPHCSCAEFQDSLNLSYHPSGLSLHLRPPSPGSSPQEQSLSQVLSPEPPDPEKLPVPPAPPSKRHCRSLSVPVDLSRWQPVWRPAPSKLWTPIKHRGSGGGGGPQVPHQSPPKRVSSLRFLQAPSASSQCAPAHRPYSPPFFSLALAQDSSHPSAASPQSGSWESDAESLSPCPPQRRFSLSPSLGPQASRFLPSARSSPASSPELPWRPRGLRNLPRSRSQPCDLDARKAGVKRRHEEDPRRLRPSLDFDKMNQKPYSGGLCLQETAREGSSISPPWFMACSPPPLSASCSPIGGSSQVLSESEEEEEGAVRWGRQALSKRTLCQQDFGDLDLNLIEEN.

N-acetylmethionine is present on Met-1. The tract at residues 76–120 is disordered; the sequence is LHLRPPSPGSSPQEQSLSQVLSPEPPDPEKLPVPPAPPSKRHCRS. Over residues 85 to 97 the composition is skewed to low complexity; that stretch reads SSPQEQSLSQVLS. Phosphoserine occurs at positions 122 and 162. 2 disordered regions span residues 141–167 and 201–294; these read LWTPIKHRGSGGGGGPQVPHQSPPKRV and DSSH…EDPR. Polar residues predominate over residues 201-215; that stretch reads DSSHPSAASPQSGSW. 4 positions are modified to phosphoserine: Ser-232, Ser-234, Ser-255, and Ser-273. A compositionally biased stretch (low complexity) spans 241–256; the sequence is ASRFLPSARSSPASSP. The segment covering 278–294 has biased composition (basic and acidic residues); sequence LDARKAGVKRRHEEDPR. A Phosphoserine modification is found at Ser-299.

It belongs to the FAM53 family.

The polypeptide is Protein FAM53C (Bos taurus (Bovine)).